Consider the following 1199-residue polypeptide: MSQTFATIDGNEAVARVAYKLNEVIAIYPITPSSAMGEWADAWMAEGRPNLWGTVPSVVQMQSEGGAAGAVHGALQTGSLSTTFTASQGLLLMIPNLYKIGGELTSMVVHVAARSLATHALSIFGDHSDVMAARGTGFAMLCSASVQESHDFALIAHAATLDTRVSFLHFFDGFRTSHEVQKVELLADDDVRSLINEDKIFAHRARALTPDSPLLRGTAQNPDVFFQAREGANPYYNACPAIVQGIMDKFGERTGRYYQIYEYHGASDADRLIIIMGSGCETVHETVDYLNARGEKVGVLKVRLFRPWDVERFVQALPHSVQAIAVLDRTKEPGSAGEPLYQDVVTAIHEGWVNKNNSPVPSPQSPVPKIIGGRYGLSSKEFTPAMVKAVFDNLAQATPKNHFTIGINDDVTHTSLEYDPSFSTEPDNVVRAMFYGLGSDGTVGANKNSIKIIGEGTDNYAQGYFVYDSKKSGSMTVSHLRFGSQPIRSTYLIDQANFIGCHHWGFLERIEVLNAAAHGATILLNSPYNAATVWENLPLKVRLQILDKQLKLYVINANQVARDSGMGGRINTIMQVCFFALAGVLPEVQAIAKIKQAIEKTYGKKGVEVVRMNLQAVDQTLENLHEVKIPIEEKGKWIDEEALLSNQSPFSTSAPKFVRDVLGKIMVWQGDDLPVSTLPPDGTFPTGTAKWEKRNVAQEIPVWDTDICVQCSKCVMVCPHAAIRAKVYQPSELENAPPTFKSVDAKDRDFANQKFTIQVAPEDCTGCAICVNVCPAKNKSEPSLKAINMANQLPLREQERDNWDFFLNLPNPDRRNLKLNQIRQQQLQEPLFEFSGACAGCGETPYVKLLTQLFGDRSVIANATGCSSIYGGNLPTTPWTKNNDGRGPAWSNSLFEDNAEFGFGYRLSLDKQAEFAAELLQQFSTEVGDNLVDSILKAPQKTEADIWEQRQRIELLKQQLDKIPTFDPNLKSKIQNLKSLADYLVKKSVWIIGGDGWAYDIDFGGIDHVIASGRNVNILVMDTEVYSNTGGQSSKATPKAAVAKFAASGKPAQKKDMGLMAMNYGNVYVASVALGAKDDQTLKAFLEAEAFDGPSIIIAYSHCIAHGINMTTGMNQQKALVESGRWLLYRYNPLLQEQGKNPLQLDMRSPTQSVEQSMYQENRFKMLTKSKPEVAKQLLEQAQAEVDARWQMYQYLASR.

2 4Fe-4S ferredoxin-type domains span residues 699–728 (EIPV…AKVY) and 755–784 (FTIQ…EPSL). Residues cysteine 708, cysteine 711, cysteine 714, cysteine 718, cysteine 764, cysteine 767, cysteine 770, cysteine 774, cysteine 838, cysteine 841, cysteine 866, and cysteine 1103 each contribute to the [4Fe-4S] cluster site.

Belongs to the pyruvate:ferredoxin/flavodoxin oxidoreductase family. The cofactor is [4Fe-4S] cluster.

It carries out the reaction oxidized [flavodoxin] + pyruvate + CoA + 2 H(+) = reduced [flavodoxin] + acetyl-CoA + CO2. Its function is as follows. Oxidoreductase required for the transfer of electrons from pyruvate to flavodoxin, which reduces nitrogenase. This chain is Pyruvate-flavodoxin oxidoreductase (nifJ), found in Nostoc sp. (strain PCC 7120 / SAG 25.82 / UTEX 2576).